A 148-amino-acid chain; its full sequence is Protein ORM1 (148 aa).

The next 4 membrane-spanning stretches (helical) occupy residues 12-32 (WIIH…FPGV), 36-56 (WSWT…FHLI), 89-109 (FLII…HYDL), and 111-131 (MFSW…LPVT).

To yeast YLR350W C-terminus.

The protein localises to the membrane. The polypeptide is Protein ORM1 (ORM1) (Saccharomyces pastorianus (strain ATCC 76670 / Carlsberg bottom yeast no.2 / CBS 1503 / CLIB 180 / NBRC 10610 / NRRL Y-1525) (Saaz-type lager yeast)).